Here is a 382-residue protein sequence, read N- to C-terminus: MDFGALPPEVNSARMYGGAGAADLLAAAAAWNGIAVEVSTAASSVGSVITRLSTEHWMGPASLSMAAAVQPYLVWLTCTAESSALAAAQAMASAAAFETAFALTVPPAEVVANRALLAELTATNILGQNVSAIAATEARYGEMWAQDASAMYGYAAASAVAARLNPLTRPSHITNPAGLAHQAAAVGQAGASAFARQVGLSHLISDVADAVLSFASPVMSAADTGLEAVRQFLNLDVPLFVESAFHGLGGVADFATAAIGNMTLLADAMGTVGGAAPGGGAAAAVAHAVAPAGVGGTALTADLGNASVVGRLSVPASWSTAAPATAAGAALDGTGWAVPEEDGPIAVMPPAPGMVVAANSVGADSGPRYGVKPIVMPKHGLF.

This sequence belongs to the mycobacterial PPE family.

It is found in the secreted. The protein localises to the cell wall. It localises to the cell surface. Functionally, virulence factor that modulates host innate immune response. This chain is PPE family protein PPE44, found in Mycobacterium tuberculosis (strain CDC 1551 / Oshkosh).